We begin with the raw amino-acid sequence, 407 residues long: Bifunctional enzyme IspD/IspF (407 aa).

Positions 1–247 (MVHIQADGAR…RLSHNALPDV (247 aa)) are 2-C-methyl-D-erythritol 4-phosphate cytidylyltransferase. Residues 248–407 (RTGNGYDVHQ…ATVVFQGKPQ (160 aa)) form a 2-C-methyl-D-erythritol 2,4-cyclodiphosphate synthase region. A divalent metal cation is bound by residues D254 and H256. Residues 254–256 (DVH) and 280–281 (HS) each bind 4-CDP-2-C-methyl-D-erythritol 2-phosphate. H288 is a binding site for a divalent metal cation. Residues 302 to 304 (DIG), 378 to 381 (TTNE), F385, and R388 contribute to the 4-CDP-2-C-methyl-D-erythritol 2-phosphate site.

This sequence in the N-terminal section; belongs to the IspD/TarI cytidylyltransferase family. IspD subfamily. The protein in the C-terminal section; belongs to the IspF family. Requires a divalent metal cation as cofactor.

The enzyme catalyses 2-C-methyl-D-erythritol 4-phosphate + CTP + H(+) = 4-CDP-2-C-methyl-D-erythritol + diphosphate. It catalyses the reaction 4-CDP-2-C-methyl-D-erythritol 2-phosphate = 2-C-methyl-D-erythritol 2,4-cyclic diphosphate + CMP. Its pathway is isoprenoid biosynthesis; isopentenyl diphosphate biosynthesis via DXP pathway; isopentenyl diphosphate from 1-deoxy-D-xylulose 5-phosphate: step 2/6. It participates in isoprenoid biosynthesis; isopentenyl diphosphate biosynthesis via DXP pathway; isopentenyl diphosphate from 1-deoxy-D-xylulose 5-phosphate: step 4/6. In terms of biological role, bifunctional enzyme that catalyzes the formation of 4-diphosphocytidyl-2-C-methyl-D-erythritol from CTP and 2-C-methyl-D-erythritol 4-phosphate (MEP) (IspD), and catalyzes the conversion of 4-diphosphocytidyl-2-C-methyl-D-erythritol 2-phosphate (CDP-ME2P) to 2-C-methyl-D-erythritol 2,4-cyclodiphosphate (ME-CPP) with a corresponding release of cytidine 5-monophosphate (CMP) (IspF). This chain is Bifunctional enzyme IspD/IspF, found in Allorhizobium ampelinum (strain ATCC BAA-846 / DSM 112012 / S4) (Agrobacterium vitis (strain S4)).